A 639-amino-acid polypeptide reads, in one-letter code: Kinesin-like protein KIF22 (639 aa).

The Kinesin motor domain maps to 18–345 (RVRVAVRLRP…LNFAAKSKQI (328 aa)). 102–109 (GPTGAGKT) contributes to the ATP binding site. A disordered region spans residues 358–400 (IAALPAMKRPREEAETAAGSRQRKKSKTDSTESSPNTSMDAAS). A compositionally biased stretch (polar residues) spans 388-397 (TESSPNTSMD). Residues 439–484 (KRERMALLKKWEESQMEIERLKEKQKELEQKAIEAEARLEKSTNSD) adopt a coiled-coil conformation. Positions 549–552 (GREN) match the Important for regulated proteolytic degradation motif.

It belongs to the TRAFAC class myosin-kinesin ATPase superfamily. Kinesin family. Post-translationally, ubiquitinated, leading to its subsequent proteasomal degradation.

The protein resides in the nucleus. The protein localises to the cytoplasm. It is found in the cytoskeleton. In terms of biological role, kinesin family member that is involved in spindle formation and the movements of chromosomes during mitosis and meiosis. Binds to microtubules and to DNA. This chain is Kinesin-like protein KIF22 (kif22), found in Xenopus tropicalis (Western clawed frog).